A 388-amino-acid polypeptide reads, in one-letter code: UDP-N-acetylglucosamine--N-acetylmuramyl-(pentapeptide) pyrophosphoryl-undecaprenol N-acetylglucosamine transferase (388 aa).

Residues 42–44 (TGG), asparagine 159, arginine 195, serine 223, isoleucine 277, and glutamine 322 each bind UDP-N-acetyl-alpha-D-glucosamine.

It belongs to the glycosyltransferase 28 family. MurG subfamily.

The protein localises to the cell inner membrane. It catalyses the reaction di-trans,octa-cis-undecaprenyl diphospho-N-acetyl-alpha-D-muramoyl-L-alanyl-D-glutamyl-meso-2,6-diaminopimeloyl-D-alanyl-D-alanine + UDP-N-acetyl-alpha-D-glucosamine = di-trans,octa-cis-undecaprenyl diphospho-[N-acetyl-alpha-D-glucosaminyl-(1-&gt;4)]-N-acetyl-alpha-D-muramoyl-L-alanyl-D-glutamyl-meso-2,6-diaminopimeloyl-D-alanyl-D-alanine + UDP + H(+). Its pathway is cell wall biogenesis; peptidoglycan biosynthesis. Functionally, cell wall formation. Catalyzes the transfer of a GlcNAc subunit on undecaprenyl-pyrophosphoryl-MurNAc-pentapeptide (lipid intermediate I) to form undecaprenyl-pyrophosphoryl-MurNAc-(pentapeptide)GlcNAc (lipid intermediate II). In Albidiferax ferrireducens (strain ATCC BAA-621 / DSM 15236 / T118) (Rhodoferax ferrireducens), this protein is UDP-N-acetylglucosamine--N-acetylmuramyl-(pentapeptide) pyrophosphoryl-undecaprenol N-acetylglucosamine transferase.